The chain runs to 800 residues: Calmodulin-sensitive adenylate cyclase (800 aa).

An N-terminal signal peptide occupies residues 1 to 33 (MTRNKFIPNKFSIISFSVLLFAISSSQAIEVNA). Residues 60–273 (KDSINNLVKT…MFEYMNKLEK (214 aa)) enclose the ATLF-like domain. The segment at 294-349 (DVLKGEKALKASGLVPEHADAFKKIARELNTYILFRPVNKLATNLIKSGVATKGLN) is catalytic CA1. The catalytic CB stretch occupies residues 350-489 (VHGKSSDWGP…NVEGVLKPLT (140 aa)). The active-site Proton acceptor is His-351. Positions 490–622 (ADYDLFALAP…RFIEKNITGK (133 aa)) are catalytic CA2. Mg(2+)-binding residues include Asp-491 and Asp-493. 3',5'-cyclic AMP contacts are provided by residues Thr-548 and 577-579 (HGT). His-577 contacts Mg(2+). Residues 623–800 (DYLYYFNRSY…EVFQKIIDEK (178 aa)) are interaction with calmodulin.

The protein belongs to the adenylyl cyclase class-2 family. Interacts (via ATLF domain) with the cleaved form of protective antigen (PA-63) anthrax toxin; interaction is required for EF translocation into the host cytoplasm. Requires Ca(2+) as cofactor.

It is found in the secreted. The protein localises to the host cytoplasm. Its subcellular location is the host cytosol. The enzyme catalyses ATP = 3',5'-cyclic AMP + diphosphate. Its activity is regulated as follows. Host calmodulin is an absolute requirement for its activation. Inhibited by ethyl 5-aminopyrazolo[1,5-a]quinazoline-3-carboxylate. Edema factor (EF), which constitutes one of the three proteins composing the anthrax toxin, causes edema in the host. Acts as a calmodulin-dependent adenylyl cyclase by converting ATP to cAMP, leading to dramatic elevation of intracellular cAMP levels in the host, thereby causing edema. EF is not toxic by itself and only acts as an edema factor when associated with protective antigen (PA) to form the edema toxin (EdTx). Required for the survival of germinated spores within macrophages at the early stages of infection. This Bacillus anthracis protein is Calmodulin-sensitive adenylate cyclase (cya).